We begin with the raw amino-acid sequence, 505 residues long: SusD-like protein P2 (505 aa).

The N-terminal stretch at 1 to 17 is a signal peptide; sequence MKKYKITFIVLLLTLVG. A lipid anchor (N-palmitoyl cysteine) is attached at Cys18. A lipid anchor (S-diacylglycerol cysteine) is attached at Cys18.

This sequence belongs to the SusD family.

The protein resides in the cell outer membrane. Its function is as follows. Polysaccharide-binding protein probably involved in ulvan degradation. Ulvan is the main polysaccharide component of the Ulvales (green seaweed) cell wall. It is composed of disaccharide building blocks comprising 3-sulfated rhamnose (Rha3S) linked to D-glucuronic acid (GlcA), L-iduronic acid (IduA), or D-xylose (Xyl). The SusD-like protein may mediate ulvan oligomer-binding before transport in the periplasm for further degradation. The protein is SusD-like protein P2 of Formosa agariphila (strain DSM 15362 / KCTC 12365 / LMG 23005 / KMM 3901 / M-2Alg 35-1).